A 362-amino-acid polypeptide reads, in one-letter code: Alanine racemase (362 aa).

Residue K33 is the Proton acceptor; specific for D-alanine of the active site. K33 carries the N6-(pyridoxal phosphate)lysine modification. R129 serves as a coordination point for substrate. Y254 functions as the Proton acceptor; specific for L-alanine in the catalytic mechanism. M302 is a binding site for substrate.

The protein belongs to the alanine racemase family. Requires pyridoxal 5'-phosphate as cofactor.

The catalysed reaction is L-alanine = D-alanine. The protein operates within amino-acid biosynthesis; D-alanine biosynthesis; D-alanine from L-alanine: step 1/1. Catalyzes the interconversion of L-alanine and D-alanine. May also act on other amino acids. The protein is Alanine racemase (alr) of Xylella fastidiosa (strain 9a5c).